The chain runs to 210 residues: uncharacterized protein (210 aa).

This sequence to E.coli YkgK.

This is an uncharacterized protein from Escherichia coli (strain K12).